We begin with the raw amino-acid sequence, 381 residues long: Odorant receptor 46a, isoform A (381 aa).

Over 1-37 the chain is Cytoplasmic; sequence MSKGVEIFYKGQKAFLNILSLWPQIERRWRIIHQVNY. Residues 38–58 form a helical membrane-spanning segment; that stretch reads VHVIVFWVLLFDLLLVLHVMA. N59 is a glycosylation site (N-linked (GlcNAc...) asparagine). Topologically, residues 59-65 are extracellular; that stretch reads NLSYMSE. A helical membrane pass occupies residues 66–86; the sequence is VVKAIFILATSAGHTTKLLSI. At 87–127 the chain is on the cytoplasmic side; sequence KANNVQMEELFRRLDNEEFRPRGANEELIFAAACERSRKLR. Residues 128 to 148 form a helical membrane-spanning segment; sequence DFYGALSFAALSMILIPQFAL. The Extracellular segment spans residues 149–170; it reads DWSHLPLKTYNPLGENTGSPAY. The chain crosses the membrane as a helical span at residues 171–191; that stretch reads WLLYCYQCLALSVSCITNIGF. Topologically, residues 192–255 are cytoplasmic; it reads DSLCSSLFIF…KTVERLLCKP (64 aa). Residues 256-276 traverse the membrane as a helical segment; it reads ISVQIFCSVLVLTANFYAIAV. Topologically, residues 277-287 are extracellular; sequence LSDERLELFKY. Residues 288 to 308 traverse the membrane as a helical segment; it reads VTYQACMLIQIFILCYYAGEV. Residues 309 to 355 are Cytoplasmic-facing; that stretch reads TQRSLDLPHELYKTSWVDWDYRSRRIALLFMQRLHSTLRIRTLNPSL. Residues 356-376 form a helical membrane-spanning segment; the sequence is GFDLMLFSSIVNCSYSYFALL. Topologically, residues 377-381 are extracellular; that stretch reads KRVNS.

It belongs to the insect chemoreceptor superfamily. Heteromeric odorant receptor channel (TC 1.A.69) family. Or2a subfamily. In terms of assembly, interacts with Orco. Complexes exist early in the endomembrane system in olfactory sensory neurons (OSNs), coupling these complexes to the conserved ciliary trafficking pathway. Isoform A is expressed in a subset of 17 olfactory receptor neurons in the maxillary palp.

Its subcellular location is the cell membrane. Its function is as follows. Odorant receptor which mediates acceptance or avoidance behavior, depending on its substrates. The odorant receptor repertoire encodes a large collection of odor stimuli that vary widely in identity, intensity, and duration. May form a complex with Orco to form odorant-sensing units, providing sensitive and prolonged odorant signaling and calcium permeability. This chain is Odorant receptor 46a, isoform A (Or46a), found in Drosophila melanogaster (Fruit fly).